A 282-amino-acid chain; its full sequence is NADPH-dependent 7-cyano-7-deazaguanine reductase (282 aa).

82 to 84 serves as a coordination point for substrate; the sequence is IES. 84–85 contacts NADPH; the sequence is SK. Cys189 acts as the Thioimide intermediate in catalysis. Catalysis depends on Asp196, which acts as the Proton donor. A substrate-binding site is contributed by 228-229; sequence HE. Residue 257-258 coordinates NADPH; the sequence is RG.

It belongs to the GTP cyclohydrolase I family. QueF type 2 subfamily. In terms of assembly, homodimer.

The protein resides in the cytoplasm. The catalysed reaction is 7-aminomethyl-7-carbaguanine + 2 NADP(+) = 7-cyano-7-deazaguanine + 2 NADPH + 3 H(+). Its pathway is tRNA modification; tRNA-queuosine biosynthesis. In terms of biological role, catalyzes the NADPH-dependent reduction of 7-cyano-7-deazaguanine (preQ0) to 7-aminomethyl-7-deazaguanine (preQ1). The chain is NADPH-dependent 7-cyano-7-deazaguanine reductase from Delftia acidovorans (strain DSM 14801 / SPH-1).